The chain runs to 564 residues: Arginine--tRNA ligase (564 aa).

The short motif at 122–132 is the 'HIGH' region element; it reads PNIAKPFSIGH.

It belongs to the class-I aminoacyl-tRNA synthetase family. As to quaternary structure, monomer.

The protein resides in the cytoplasm. The enzyme catalyses tRNA(Arg) + L-arginine + ATP = L-arginyl-tRNA(Arg) + AMP + diphosphate. This is Arginine--tRNA ligase from Lactococcus lactis subsp. lactis (strain IL1403) (Streptococcus lactis).